The primary structure comprises 106 residues: MTLEKHAFKMQLNPGMEAEYRKRHDEIWPELVDLLHQSGASDYSIHLDRETNTLFGVLTRPKDHTMASLPDHPVMKKWWAHMADIMATNPDNSPVQSDLVTLFHMP.

Tyr20 lines the substrate pocket. His24 functions as the Proton donor in the catalytic mechanism. Substrate-binding positions include Tyr43 and 78–79 (WW).

Belongs to the rhamnose mutarotase family. In terms of assembly, homodimer.

Its subcellular location is the cytoplasm. The enzyme catalyses alpha-L-rhamnose = beta-L-rhamnose. Its pathway is carbohydrate degradation; L-rhamnose degradation. Involved in the anomeric conversion of L-rhamnose. This is L-rhamnose mutarotase (rhaM) from Rhizobium leguminosarum bv. trifolii.